The chain runs to 154 residues: Large ribosomal subunit protein uL23 (154 aa).

It belongs to the universal ribosomal protein uL23 family.

Functionally, this protein binds to a specific region on the 26S rRNA. This chain is Large ribosomal subunit protein uL23 (RPL23A), found in Fritillaria agrestis (Stinkbells).